The chain runs to 186 residues: Probable RNA 2'-phosphotransferase (186 aa).

This sequence belongs to the KptA/TPT1 family.

Its function is as follows. Removes the 2'-phosphate from RNA via an intermediate in which the phosphate is ADP-ribosylated by NAD followed by a presumed transesterification to release the RNA and generate ADP-ribose 1''-2''-cyclic phosphate (APPR&gt;P). May function as an ADP-ribosylase. This is Probable RNA 2'-phosphotransferase from Pectobacterium carotovorum subsp. carotovorum (strain PC1).